Reading from the N-terminus, the 208-residue chain is Ribonuclease HII (208 aa).

The 192-residue stretch at 17–208 (LRVCGIDEAG…SFRLRQLGEK (192 aa)) folds into the RNase H type-2 domain. The a divalent metal cation site is built by aspartate 23, glutamate 24, and aspartate 120.

It belongs to the RNase HII family. Requires Mn(2+) as cofactor. The cofactor is Mg(2+).

The protein resides in the cytoplasm. It carries out the reaction Endonucleolytic cleavage to 5'-phosphomonoester.. Functionally, endonuclease that specifically degrades the RNA of RNA-DNA hybrids. The chain is Ribonuclease HII from Chlorobium luteolum (strain DSM 273 / BCRC 81028 / 2530) (Pelodictyon luteolum).